Here is a 313-residue protein sequence, read N- to C-terminus: Cytochrome c biogenesis protein CcsA (313 aa).

Helical transmembrane passes span 9-29, 44-64, 71-91, 111-131, 143-163, 217-237, 244-264, and 278-298; these read ILTH…LITF, GIIV…VSSG, LYES…IPYF, GFAT…VPAL, MILG…LLVI, VISL…VWAN, WNWD…AIYL, and AIVA…VNLL.

It belongs to the CcmF/CycK/Ccl1/NrfE/CcsA family. As to quaternary structure, may interact with Ccs1.

The protein localises to the plastid. The protein resides in the chloroplast thylakoid membrane. Functionally, required during biogenesis of c-type cytochromes (cytochrome c6 and cytochrome f) at the step of heme attachment. The chain is Cytochrome c biogenesis protein CcsA from Solanum lycopersicum (Tomato).